The sequence spans 330 residues: GTP 3',8-cyclase (330 aa).

A Radical SAM core domain is found at 9 to 225 (RFGRTVNYVR…IRRHHELIPA (217 aa)). A GTP-binding site is contributed by arginine 18. Positions 25 and 29 each coordinate [4Fe-4S] cluster. Tyrosine 31 is an S-adenosyl-L-methionine binding site. Cysteine 32 contributes to the [4Fe-4S] cluster binding site. Residue arginine 67 coordinates GTP. S-adenosyl-L-methionine is bound at residue glycine 71. Residue threonine 97 participates in GTP binding. Serine 121 contributes to the S-adenosyl-L-methionine binding site. Lysine 158 contributes to the GTP binding site. Residue methionine 192 participates in S-adenosyl-L-methionine binding. Cysteine 256 and cysteine 259 together coordinate [4Fe-4S] cluster. Residue 261 to 263 (RVR) coordinates GTP. Cysteine 273 contacts [4Fe-4S] cluster.

Belongs to the radical SAM superfamily. MoaA family. Monomer and homodimer. [4Fe-4S] cluster serves as cofactor.

It carries out the reaction GTP + AH2 + S-adenosyl-L-methionine = (8S)-3',8-cyclo-7,8-dihydroguanosine 5'-triphosphate + 5'-deoxyadenosine + L-methionine + A + H(+). The protein operates within cofactor biosynthesis; molybdopterin biosynthesis. In terms of biological role, catalyzes the cyclization of GTP to (8S)-3',8-cyclo-7,8-dihydroguanosine 5'-triphosphate. The polypeptide is GTP 3',8-cyclase (Marinobacter nauticus (strain ATCC 700491 / DSM 11845 / VT8) (Marinobacter aquaeolei)).